The primary structure comprises 393 residues: uncharacterized protein (393 aa).

Positions 72, 82, 85, and 160 each coordinate [4Fe-4S] cluster. 4 residues coordinate S-adenosyl-L-methionine: glutamine 215, phenylalanine 245, glutamate 267, and aspartate 313. Cysteine 340 serves as the catalytic Nucleophile.

Belongs to the class I-like SAM-binding methyltransferase superfamily. RNA M5U methyltransferase family.

This is an uncharacterized protein from Nitrosomonas europaea (strain ATCC 19718 / CIP 103999 / KCTC 2705 / NBRC 14298).